The sequence spans 318 residues: Olfactory receptor-like protein COR3 (318 aa).

Residues 1 to 26 (MASGNCTTPTTFILSGLTDNPGLQMP) are Extracellular-facing. A glycan (N-linked (GlcNAc...) asparagine) is linked at Asn5. A helical membrane pass occupies residues 27 to 49 (LFMVFLAIYTITLLTNLGLIRLI). At 50-57 (SVDLHLQT) the chain is on the cytoplasmic side. A helical membrane pass occupies residues 58 to 79 (PMYIFLQNLSFTDAAYSTVITP). At 80–100 (KMLATFLEERKTISYVGCILQ) the chain is on the extracellular side. An intrachain disulfide couples Cys97 to Cys179. A helical membrane pass occupies residues 101–120 (YFSFVLLTTSECLLLAVMAY). The Cytoplasmic portion of the chain corresponds to 121–139 (DRYVAICKPLLYPAIMTKA). A helical transmembrane segment spans residues 140-164 (VCWRLVESLYFLAFLNSLVHTCGLL). Topologically, residues 165-205 (KLSFCYSNVVNHFFCDISPLFQISSSSIAISELLVIISGSL) are extracellular. Residues 206-226 (FVMSSIIIILISYVFIILTVV) traverse the membrane as a helical segment. Residues 227–239 (MIRSKDGKYKAFS) lie on the Cytoplasmic side of the membrane. A helical transmembrane segment spans residues 240–260 (TCTSHLMAVSLFHGTVIFMYL). Residues 261–271 (RPVKLFSLDTD) lie on the Extracellular side of the membrane. A helical membrane pass occupies residues 272–292 (KIASLFYTVVIPMLNPLIYSW). The Cytoplasmic portion of the chain corresponds to 293–318 (RNKEVKDALRRLTATTFGFIDSKAVQ).

Belongs to the G-protein coupled receptor 1 family.

The protein resides in the cell membrane. Its function is as follows. Odorant receptor. The chain is Olfactory receptor-like protein COR3 (COR3) from Gallus gallus (Chicken).